A 298-amino-acid polypeptide reads, in one-letter code: 4-hydroxy-tetrahydrodipicolinate synthase (298 aa).

Pyruvate is bound at residue T51. The active-site Proton donor/acceptor is Y139. The active-site Schiff-base intermediate with substrate is K167. Position 209 (I209) interacts with pyruvate.

This sequence belongs to the DapA family. In terms of assembly, homotetramer; dimer of dimers.

It is found in the cytoplasm. The enzyme catalyses L-aspartate 4-semialdehyde + pyruvate = (2S,4S)-4-hydroxy-2,3,4,5-tetrahydrodipicolinate + H2O + H(+). The protein operates within amino-acid biosynthesis; L-lysine biosynthesis via DAP pathway; (S)-tetrahydrodipicolinate from L-aspartate: step 3/4. Functionally, catalyzes the condensation of (S)-aspartate-beta-semialdehyde [(S)-ASA] and pyruvate to 4-hydroxy-tetrahydrodipicolinate (HTPA). The protein is 4-hydroxy-tetrahydrodipicolinate synthase of Haemophilus influenzae (strain ATCC 51907 / DSM 11121 / KW20 / Rd).